A 359-amino-acid chain; its full sequence is Probable F-box protein At3g61730 (359 aa).

2 stretches are compositionally biased toward basic and acidic residues: residues 1–14 (MKTRSSDAEGDSRG) and 37–48 (QKNDIQREEDGR). The disordered stretch occupies residues 1–60 (MKTRSSDAEGDSRGKMIAPVGEGNGGRKRKLVQSNEQKNDIQREEDGRAKRRIVQSSDQK). In terms of domain architecture, F-box; degenerate spans 82–128 (QSRFSWYEQDIWTYISRFLDGKSLVKLGATNKWFYKIAMEDTVWRFA).

In terms of assembly, interacts with SKP1A. In terms of tissue distribution, expressed in flower buds, developing anthers, pollen grains, siliques, rosette leaves and roots. Detected at lower levels in open flowers, stems and cauline leaves. Expressed in young seedling in the hydathodes, shoot apical meristem, root tips and lateral root primordia.

The protein resides in the nucleus. Functionally, regulates tapetum degeneration and pollen maturation during anther development. The chain is Probable F-box protein At3g61730 (RMF) from Arabidopsis thaliana (Mouse-ear cress).